Reading from the N-terminus, the 443-residue chain is Probable glycine dehydrogenase (decarboxylating) subunit 1 (443 aa).

It belongs to the GcvP family. N-terminal subunit subfamily. As to quaternary structure, the glycine cleavage system is composed of four proteins: P, T, L and H. In this organism, the P 'protein' is a heterodimer of two subunits.

The enzyme catalyses N(6)-[(R)-lipoyl]-L-lysyl-[glycine-cleavage complex H protein] + glycine + H(+) = N(6)-[(R)-S(8)-aminomethyldihydrolipoyl]-L-lysyl-[glycine-cleavage complex H protein] + CO2. Functionally, the glycine cleavage system catalyzes the degradation of glycine. The P protein binds the alpha-amino group of glycine through its pyridoxal phosphate cofactor; CO(2) is released and the remaining methylamine moiety is then transferred to the lipoamide cofactor of the H protein. This is Probable glycine dehydrogenase (decarboxylating) subunit 1 from Koribacter versatilis (strain Ellin345).